The primary structure comprises 184 residues: Histone H3-like centromeric protein CSE4 (184 aa).

Positions 54-81 are disordered; sequence YIQPERSASSQQIHPPEHHISAHERITK. Residues 68–80 show a composition bias toward basic and acidic residues; sequence PPEHHISAHERIT. Residues 82–182 are H3-like; sequence ARGTRYKPTD…MQLARRIRGQ (101 aa).

It belongs to the histone H3 family. Component of centromeric nucleosomes, where DNA is wrapped around a histone octamer core. The octamer contains two molecules each of H2A, H2B, CSE4/CENPA and H4 assembled in one CSE4-H4 heterotetramer and two H2A-H2B heterodimers. Interacts with the inner kinetochore. In terms of processing, ubiquitinated. Is degraded through ubiquitin-mediated proteolysis when not protected by its association to the kinetochore.

It localises to the nucleus. The protein resides in the chromosome. Its subcellular location is the centromere. Histone H3-like nucleosomal protein that is specifically found in centromeric nucleosomes. Replaces conventional H3 in the nucleosome core of centromeric chromatin that serves as an assembly site for the inner kinetochore. Required for recruitment and assembly of kinetochore proteins, mitotic progression and chromosome segregation. May serve as an epigenetic mark that propagates centromere identity through replication and cell division. The sequence is that of Histone H3-like centromeric protein CSE4 (CSE4) from Kluyveromyces lactis (strain ATCC 8585 / CBS 2359 / DSM 70799 / NBRC 1267 / NRRL Y-1140 / WM37) (Yeast).